Reading from the N-terminus, the 253-residue chain is MIVHQQLPMSVNVASLDFLLIELVHTAKRLAEDRKKKSSSEKSIESDFQMLESIGFQVGRKITERLLLNRNRITETTDVMRFLCRELWPIVFRKPLDNLKTNRRGIFVLTDTYFYWFTKMTAMTGTEMAQITTPYFYFPSGFIRGVVYTFGYSAQVIAQCPNLPTCIFHVKFSPNPTQTSPGKPSTSESSQTDTSTRPANSQTPTTTRASSYTTLVSTSNQVSNEAEASAVETSANQAQNTEDATENEDRLPS.

Over residues 175 to 184 (NPTQTSPGKP) the composition is skewed to polar residues. Residues 175–253 (NPTQTSPGKP…ATENEDRLPS (79 aa)) form a disordered region. S180 carries the phosphoserine modification. 2 stretches are compositionally biased toward low complexity: residues 185 to 196 (STSESSQTDTST) and 203 to 214 (TPTTTRASSYTT). Positions 215–242 (LVSTSNQVSNEAEASAVETSANQAQNTE) are enriched in polar residues.

Belongs to the TRAPP small subunits family. BET3 subfamily.

This is an uncharacterized protein from Schizosaccharomyces pombe (strain 972 / ATCC 24843) (Fission yeast).